Reading from the N-terminus, the 66-residue chain is Large ribosomal subunit protein bL33c (66 aa).

It belongs to the bacterial ribosomal protein bL33 family.

The protein localises to the plastid. It is found in the chloroplast. In Fagopyrum esculentum subsp. ancestrale (Wild buckwheat), this protein is Large ribosomal subunit protein bL33c.